Reading from the N-terminus, the 241-residue chain is ATP synthase subunit a (241 aa).

Transmembrane regions (helical) follow at residues 30–50 (GQVF…VVIG), 91–111 (FIGT…LVPW), 128–148 (INTT…AGLS), 193–213 (LVVA…VMFL), and 214–234 (GLFT…YYIG).

Belongs to the ATPase A chain family. As to quaternary structure, F-type ATPases have 2 components, CF(1) - the catalytic core - and CF(0) - the membrane proton channel. CF(1) has five subunits: alpha(3), beta(3), gamma(1), delta(1), epsilon(1). CF(0) has four main subunits: a, b, b' and c.

Its subcellular location is the cellular thylakoid membrane. In terms of biological role, key component of the proton channel; it plays a direct role in the translocation of protons across the membrane. The protein is ATP synthase subunit a of Prochlorococcus marinus (strain NATL1A).